The sequence spans 567 residues: Asparagine--tRNA ligase, chloroplastic/mitochondrial (567 aa).

The OB DNA-binding region spans 113–191; it reads NIMGWVRTLR…VELKVEKIIV (79 aa).

Belongs to the class-II aminoacyl-tRNA synthetase family.

The protein localises to the plastid. Its subcellular location is the chloroplast. The protein resides in the mitochondrion. It catalyses the reaction tRNA(Asn) + L-asparagine + ATP = L-asparaginyl-tRNA(Asn) + AMP + diphosphate + H(+). The sequence is that of Asparagine--tRNA ligase, chloroplastic/mitochondrial from Arabidopsis thaliana (Mouse-ear cress).